We begin with the raw amino-acid sequence, 238 residues long: Ribosomal RNA small subunit methyltransferase G (238 aa).

S-adenosyl-L-methionine-binding positions include Gly-77, Phe-82, 128–129 (AE), and Arg-147.

The protein belongs to the methyltransferase superfamily. RNA methyltransferase RsmG family.

The protein resides in the cytoplasm. In terms of biological role, specifically methylates the N7 position of guanine in position 535 of 16S rRNA. The sequence is that of Ribosomal RNA small subunit methyltransferase G from Brevibacillus brevis (strain 47 / JCM 6285 / NBRC 100599).